Reading from the N-terminus, the 680-residue chain is tRNA 5-methylaminomethyl-2-thiouridine biosynthesis bifunctional protein MnmC (680 aa).

Residues M1–P267 are tRNA (mnm(5)s(2)U34)-methyltransferase. Residues I273–L680 are FAD-dependent cmnm(5)s(2)U34 oxidoreductase.

In the N-terminal section; belongs to the methyltransferase superfamily. tRNA (mnm(5)s(2)U34)-methyltransferase family. The protein in the C-terminal section; belongs to the DAO family. FAD is required as a cofactor.

It localises to the cytoplasm. The enzyme catalyses 5-aminomethyl-2-thiouridine(34) in tRNA + S-adenosyl-L-methionine = 5-methylaminomethyl-2-thiouridine(34) in tRNA + S-adenosyl-L-homocysteine + H(+). Its function is as follows. Catalyzes the last two steps in the biosynthesis of 5-methylaminomethyl-2-thiouridine (mnm(5)s(2)U) at the wobble position (U34) in tRNA. Catalyzes the FAD-dependent demodification of cmnm(5)s(2)U34 to nm(5)s(2)U34, followed by the transfer of a methyl group from S-adenosyl-L-methionine to nm(5)s(2)U34, to form mnm(5)s(2)U34. The protein is tRNA 5-methylaminomethyl-2-thiouridine biosynthesis bifunctional protein MnmC of Shewanella sp. (strain W3-18-1).